Reading from the N-terminus, the 555-residue chain is Probable metabolite transport protein YDR387C (555 aa).

Residues 1-39 (MSTDESEDVYSDLYSIISQVTSNTANDIEQLPYALTFKT) lie on the Cytoplasmic side of the membrane. The helical transmembrane segment at 40 to 60 (SLIFVGATIGGLLFGYDTGVI) threads the bilayer. Residues 61–83 (SGVLLSLKPEDLSLVVLTDVQKE) are Extracellular-facing. Residues 84–104 (LITSSTSVGSFFGSILAFPLA) traverse the membrane as a helical segment. Residues 105-118 (DRYGRRITLAICCS) are Cytoplasmic-facing. The helical transmembrane segment at 119–139 (IFILAAIGMAIARTLTFLICG) threads the bilayer. Residue R140 is a topological domain, extracellular. A helical membrane pass occupies residues 141–161 (LLVGIAVGVSAQCVPLFLSEI). Over 162-168 (SPSRIRG) the chain is Cytoplasmic. Residues 169-189 (FMLTLNIIAITGGQLVSYVIA) form a helical membrane-spanning segment. Residues 190–200 (SLMKEIDNSWR) are Extracellular-facing. The helical transmembrane segment at 201–221 (YLFALSAIPAILFLSILDFIP) threads the bilayer. The Cytoplasmic portion of the chain corresponds to 222–356 (ESPRWSISKG…TIRALIVGCM (135 aa)). A disordered region spans residues 289-313 (SSTSGTLSPPNIKRLSSNTERTSNT). Residues 357–377 (LMFFQQITGFNAFMYYAAIIF) form a helical membrane-spanning segment. Over 378–384 (SKFNIKN) the chain is Extracellular. Residues 385–405 (PLLPPILIASTNFIFTFFAMY) traverse the membrane as a helical segment. Residues 406-413 (TMDSLGRR) lie on the Cytoplasmic side of the membrane. Residues 414–434 (AILLRTILIMTVGLLLCSVGF) form a helical membrane-spanning segment. Residues 435–440 (GHDQVN) lie on the Extracellular side of the membrane. A helical transmembrane segment spans residues 441–461 (LLLISVVIYVAAYASAMGSVP). Residues 462–474 (WTCVEFLPLNRRS) are Cytoplasmic-facing. Residues 475–497 (FGASCIACTNWLTNAFVSMTYLS) traverse the membrane as a helical segment. At 498–506 (TINTIGDEN) the chain is on the extracellular side. The helical transmembrane segment at 507 to 527 (TMLIFAFFTVCAWFFVYFWYP) threads the bilayer. Residues 528-555 (EVKGLSLEEVGRVFDNGIDVHYVFRTYH) lie on the Cytoplasmic side of the membrane.

Belongs to the major facilitator superfamily. Sugar transporter (TC 2.A.1.1) family.

It is found in the membrane. This Saccharomyces cerevisiae (strain ATCC 204508 / S288c) (Baker's yeast) protein is Probable metabolite transport protein YDR387C.